Here is a 165-residue protein sequence, read N- to C-terminus: Protein AIG2 C (165 aa).

14 to 19 (YGSILE) contributes to the substrate binding site. The active-site Proton acceptor is the glutamate 82.

This sequence belongs to the gamma-glutamylcyclotransferase family. As to expression, expressed in floral organs, leaves, stems and roots.

Functionally, putative gamma-glutamylcyclotransferase. The chain is Protein AIG2 C from Arabidopsis thaliana (Mouse-ear cress).